The sequence spans 340 residues: Ferrochelatase (340 aa).

Histidine 189 and glutamate 292 together coordinate Fe cation.

This sequence belongs to the ferrochelatase family.

The protein localises to the cytoplasm. It carries out the reaction heme b + 2 H(+) = protoporphyrin IX + Fe(2+). It functions in the pathway porphyrin-containing compound metabolism; protoheme biosynthesis; protoheme from protoporphyrin-IX: step 1/1. Functionally, catalyzes the ferrous insertion into protoporphyrin IX. This Pseudomonas fluorescens biotype C protein is Ferrochelatase.